Here is a 394-residue protein sequence, read N- to C-terminus: MSRNDSGNFLISEEDWSLHRKGFDDQQRHQKKVQEAIKNNLPDLVTEESIIMSNGKDVVKIPIRSLDEYKIRYNYDKNKHVGQGDGDSEVGDVVARDGADKKQGAGKGQGAGDQAGEDYYEAEVSLMDLEEALFQELELPNLQQKERDNIVHTDIEFNDIRKTGLTGNIDKKRTMLSAYKRNAMTGKPSFYPIYPEDLKYKTWNDVTKPESKAVVLAMMDTSGSMGVWEKYMARSFFFWMTRFLRTKYETVDIEFIAHHTEAKVVSEEDFFSKGESGGTICSSVYRKSLELIDEKYDPARYNIYPFHFSDGDNLTSDNARCVKLVNDIMKKSNLFCYGEVNQYNRHSTLMSAYKNVKDDKFKYYILKQKSDVFQALKSFFKNEESGVSKASYEI.

The protein belongs to the UPF0229 family.

The protein is UPF0229 protein RBAM_009260 of Bacillus velezensis (strain DSM 23117 / BGSC 10A6 / LMG 26770 / FZB42) (Bacillus amyloliquefaciens subsp. plantarum).